Here is a 355-residue protein sequence, read N- to C-terminus: Peptide chain release factor 1 (355 aa).

Gln-233 carries the N5-methylglutamine modification.

Belongs to the prokaryotic/mitochondrial release factor family. Post-translationally, methylated by PrmC. Methylation increases the termination efficiency of RF1.

The protein resides in the cytoplasm. Peptide chain release factor 1 directs the termination of translation in response to the peptide chain termination codons UAG and UAA. In Rickettsia typhi (strain ATCC VR-144 / Wilmington), this protein is Peptide chain release factor 1.